The chain runs to 188 residues: Inner kinetochore subunit cnl2 (188 aa).

It belongs to the NKP2 family. In terms of assembly, component of the inner kinetochore constitutive centromere-associated network (CCAN) (also known as central kinetochore Sim4 complex in fission yeast), which is composed of at least cnl2, cnp3, cnp20, fta1, fta2, fta3, fta4, fta6, fta7, mal2, mhf1, mhf2, mis6, mis15, mis17, sim4 and wip1.

The protein resides in the cytoplasm. The protein localises to the nucleus. It is found in the chromosome. It localises to the centromere. Its subcellular location is the kinetochore. Component of the kinetochore, a multiprotein complex that assembles on centromeric DNA and attaches chromosomes to spindle microtubules, mediating chromosome segregation and sister chromatid segregation during meiosis and mitosis. Component of the inner kinetochore constitutive centromere-associated network (CCAN), which serves as a structural platform for outer kinetochore assembly. This is Inner kinetochore subunit cnl2 (cnl2) from Schizosaccharomyces pombe (strain 972 / ATCC 24843) (Fission yeast).